Consider the following 253-residue polypeptide: Tetraspanin-11 (253 aa).

Helical transmembrane passes span 19-39 (LLFI…AVGI), 63-83 (VLIF…GAII), 93-113 (YFCL…LAHV), and 220-240 (LLLM…GMVL).

Belongs to the tetraspanin (TM4SF) family.

It localises to the membrane. The sequence is that of Tetraspanin-11 (Tspan11) from Rattus norvegicus (Rat).